Consider the following 215-residue polypeptide: Leucyl/phenylalanyl-tRNA--protein transferase (215 aa).

The protein belongs to the L/F-transferase family.

The protein resides in the cytoplasm. The catalysed reaction is N-terminal L-lysyl-[protein] + L-leucyl-tRNA(Leu) = N-terminal L-leucyl-L-lysyl-[protein] + tRNA(Leu) + H(+). The enzyme catalyses N-terminal L-arginyl-[protein] + L-leucyl-tRNA(Leu) = N-terminal L-leucyl-L-arginyl-[protein] + tRNA(Leu) + H(+). It catalyses the reaction L-phenylalanyl-tRNA(Phe) + an N-terminal L-alpha-aminoacyl-[protein] = an N-terminal L-phenylalanyl-L-alpha-aminoacyl-[protein] + tRNA(Phe). Its function is as follows. Functions in the N-end rule pathway of protein degradation where it conjugates Leu, Phe and, less efficiently, Met from aminoacyl-tRNAs to the N-termini of proteins containing an N-terminal arginine or lysine. The sequence is that of Leucyl/phenylalanyl-tRNA--protein transferase from Campylobacter jejuni subsp. jejuni serotype O:2 (strain ATCC 700819 / NCTC 11168).